Reading from the N-terminus, the 1259-residue chain is Receptor tyrosine-protein kinase erbB-2 (1259 aa).

A signal peptide spans 1–22 (MELAAWCRWGLLLALLPSGAAG). Residues 23 to 653 (TQVCTGTDMK…EQRASPVTSI (631 aa)) lie on the Extracellular side of the membrane. A disulfide bridge links cysteine 26 with cysteine 53. N-linked (GlcNAc...) asparagine glycosylation occurs at asparagine 68. 13 cysteine pairs are disulfide-bonded: cysteine 162/cysteine 192, cysteine 195/cysteine 204, cysteine 199/cysteine 212, cysteine 220/cysteine 227, cysteine 224/cysteine 235, cysteine 236/cysteine 244, cysteine 240/cysteine 252, cysteine 255/cysteine 264, cysteine 268/cysteine 295, cysteine 299/cysteine 311, cysteine 315/cysteine 331, cysteine 334/cysteine 338, and cysteine 342/cysteine 367. Threonine 182 bears the Phosphothreonine mark. N-linked (GlcNAc...) asparagine glycosylation is present at asparagine 259. N-linked (GlcNAc...) asparagine glycosylation occurs at asparagine 421. 3 cysteine pairs are disulfide-bonded: cysteine 475-cysteine 504, cysteine 511-cysteine 519, and cysteine 514-cysteine 527. N-linked (GlcNAc...) asparagine glycosylation is present at asparagine 529. 8 disulfides stabilise this stretch: cysteine 530/cysteine 539, cysteine 543/cysteine 559, cysteine 562/cysteine 575, cysteine 566/cysteine 583, cysteine 586/cysteine 595, cysteine 599/cysteine 622, cysteine 625/cysteine 633, and cysteine 629/cysteine 641. Residue asparagine 570 is glycosylated (N-linked (GlcNAc...) asparagine). Residue asparagine 628 is glycosylated (N-linked (GlcNAc...) asparagine). Residues 654-674 (IAAVVGILLAVVVGLVLGILI) form a helical membrane-spanning segment. The required for interaction with KPNB1 and EEA1 stretch occupies residues 675–688 (KRRRQKIRKYTMRR). Positions 675 to 688 (KRRRQKIRKYTMRR) match the Nuclear localization signal motif. Residues 675-1259 (KRRRQKIRKY…PEYLGLDVPV (585 aa)) are Cytoplasmic-facing. The 268-residue stretch at 719–986 (LRKVKVLGSG…RMARDPQRFV (268 aa)) folds into the Protein kinase domain. ATP-binding positions include 725–733 (LGSGAFGTV) and lysine 752. Aspartate 844 (proton acceptor) is an active-site residue. Tyrosine 876 bears the Phosphotyrosine mark. The segment at 1027 to 1183 (QGFFCPEPTP…PKTLSPGKNG (157 aa)) is disordered. Phosphoserine is present on residues serine 1077, serine 1082, and serine 1106. Tyrosine 1111 carries the post-translational modification Phosphotyrosine. A Phosphotyrosine; by autocatalysis modification is found at tyrosine 1138. The segment covering 1145–1160 (WPQPPLALEGPLPPSR) has biased composition (pro residues). Threonine 1165 is subject to Phosphothreonine. The interval 1199–1201 (EYL) is interaction with PIK3C2B. Phosphotyrosine is present on tyrosine 1200. Positions 1203-1259 (PRGRAAPQPHPPPAFSPAFDNLYYWDQDPSERGSPPSTFEGTPTAENPEYLGLDVPV) are disordered. The segment covering 1237-1247 (PPSTFEGTPTA) has biased composition (polar residues). Tyrosine 1252 carries the post-translational modification Phosphotyrosine; by autocatalysis.

The protein belongs to the protein kinase superfamily. Tyr protein kinase family. EGF receptor subfamily. Homodimer. Heterodimer with EGFR, ERBB3 and ERBB4. Part of a complex with EGFR and either PIK3C2A or PIK3C2B. May interact with PIK3C2B when phosphorylated on Tyr-1200. Interacts with PRKCABP and PLXNB1. Interacts (when phosphorylated on Tyr-1252) with MEMO1. Interacts with MUC1. Interacts (when phosphorylated on Tyr-1138) with GRB7 (via SH2 domain). Interacts (when phosphorylated on Tyr-1252) with ERBIN. Interacts with SRC, KPNB1, PTK6, RANBP2, EEA1, CRM1, CLTC, RPA194, MYOC and ACTB. Interacts (preferentially with the tyrosine phosphorylated form) with CPNE3; this interaction occurs at the cell membrane and is increased in a growth factor heregulin-dependent manner. Interacts with HSP90AA1 and HSP90AB1 in an ATP-dependent manner; the interaction suppresses ERBB2 kinase activity. Interacts with SORL1; this interaction regulates ERBB2 subcellular distribution by promoting its recycling after internalization from endosomes back to the plasma membrane, hence stimulates ERBB2-mediated signaling. Interacts with SH3BGRL. Interacts with ROR1. In terms of processing, autophosphorylated. Autophosphorylation occurs in trans, i.e. one subunit of the dimeric receptor phosphorylates tyrosine residues on the other subunit. Ligand-binding increases phosphorylation on tyrosine residues. Signaling via SEMA4C promotes phosphorylation at Tyr-1252. Dephosphorylated by PTPN12.

Its subcellular location is the cell membrane. It localises to the cell projection. It is found in the ruffle membrane. The protein resides in the early endosome. The protein localises to the cytoplasm. Its subcellular location is the perinuclear region. It localises to the nucleus. It catalyses the reaction L-tyrosyl-[protein] + ATP = O-phospho-L-tyrosyl-[protein] + ADP + H(+). Protein tyrosine kinase that is part of several cell surface receptor complexes, but that apparently needs a coreceptor for ligand binding. Essential component of a neuregulin-receptor complex, although neuregulins do not interact with it alone. GP30 is a potential ligand for this receptor. Regulates outgrowth and stabilization of peripheral microtubules (MTs). Upon ERBB2 activation, the MEMO1-RHOA-DIAPH1 signaling pathway elicits the phosphorylation and thus the inhibition of GSK3B at cell membrane. This prevents the phosphorylation of APC and CLASP2, allowing its association with the cell membrane. In turn, membrane-bound APC allows the localization of MACF1 to the cell membrane, which is required for microtubule capture and stabilization. Its function is as follows. In the nucleus is involved in transcriptional regulation. Associates with the 5'-TCAAATTC-3' sequence in the PTGS2/COX-2 promoter and activates its transcription. Implicated in transcriptional activation of CDKN1A; the function involves STAT3 and SRC. Involved in the transcription of rRNA genes by RNA Pol I and enhances protein synthesis and cell growth. The polypeptide is Receptor tyrosine-protein kinase erbB-2 (ERBB2) (Canis lupus familiaris (Dog)).